Reading from the N-terminus, the 207-residue chain is Superoxide dismutase [Mn] (207 aa).

Mn(2+) is bound by residues His30, His78, Asp166, and His170.

Belongs to the iron/manganese superoxide dismutase family. As to quaternary structure, homodimer. Requires Mn(2+) as cofactor.

It catalyses the reaction 2 superoxide + 2 H(+) = H2O2 + O2. Functionally, destroys superoxide anion radicals which are normally produced within the cells and which are toxic to biological systems. The sequence is that of Superoxide dismutase [Mn] (sodA) from Chlamydia pneumoniae (Chlamydophila pneumoniae).